We begin with the raw amino-acid sequence, 218 residues long: Ribose-5-phosphate isomerase A (218 aa).

Substrate-binding positions include K7, 28-31, 81-84, and 94-97; these read TGST, DGAD, and KGGG. E103 serves as the catalytic Proton acceptor. K121 is a substrate binding site.

It belongs to the ribose 5-phosphate isomerase family. As to quaternary structure, homodimer.

It catalyses the reaction aldehydo-D-ribose 5-phosphate = D-ribulose 5-phosphate. It participates in carbohydrate degradation; pentose phosphate pathway; D-ribose 5-phosphate from D-ribulose 5-phosphate (non-oxidative stage): step 1/1. In terms of biological role, catalyzes the reversible conversion of ribose-5-phosphate to ribulose 5-phosphate. This Vibrio vulnificus (strain YJ016) protein is Ribose-5-phosphate isomerase A.